Reading from the N-terminus, the 443-residue chain is Putative transporter AmpG 1 (443 aa).

A run of 13 helical transmembrane segments spans residues 5-25 (SHIY…MITG), 42-62 (IGML…APVF), 78-98 (LSWI…LSFL), 104-124 (LVLL…QDTI), 143-163 (GIYI…AIYL), 171-191 (AIYK…ILVA), 230-250 (FNYF…GFYF), 254-274 (DINL…YRLP), 299-319 (VCKF…GIIM), 324-344 (ILYS…FFIL), 354-374 (ILFI…TAYI), 393-413 (LSSM…YMVV), and 415-435 (FGWQ…LLIL).

Belongs to the major facilitator superfamily.

The protein localises to the cell inner membrane. The protein is Putative transporter AmpG 1 (ampG1) of Rickettsia prowazekii (strain Madrid E).